The following is a 227-amino-acid chain: ATP-dependent dethiobiotin synthetase BioD (227 aa).

Residue 13-18 (DIGKTY) coordinates ATP. Thr17 is a binding site for Mg(2+). Lys38 is a catalytic residue. Residue Ser42 coordinates substrate. ATP-binding positions include Asp55, 116 to 119 (EGSG), and 179 to 180 (NN). Mg(2+)-binding residues include Asp55 and Glu116.

Belongs to the dethiobiotin synthetase family. Homodimer. The cofactor is Mg(2+).

Its subcellular location is the cytoplasm. It catalyses the reaction (7R,8S)-7,8-diammoniononanoate + CO2 + ATP = (4R,5S)-dethiobiotin + ADP + phosphate + 3 H(+). Its pathway is cofactor biosynthesis; biotin biosynthesis; biotin from 7,8-diaminononanoate: step 1/2. Catalyzes a mechanistically unusual reaction, the ATP-dependent insertion of CO2 between the N7 and N8 nitrogen atoms of 7,8-diaminopelargonic acid (DAPA, also called 7,8-diammoniononanoate) to form a ureido ring. This chain is ATP-dependent dethiobiotin synthetase BioD, found in Clostridium botulinum (strain Alaska E43 / Type E3).